A 739-amino-acid polypeptide reads, in one-letter code: UPF0313 protein YgiQ (739 aa).

The 279-residue stretch at 372-650 (AYEMIRFSVN…KALLRYHDPA (279 aa)) folds into the Radical SAM core domain. [4Fe-4S] cluster contacts are provided by C386, C390, and C393. Residues 685-739 (REARRQNRNTRPALTKHTPMATQRQTPATAKKASSTQSRPVNAGAKKRPKAAVGR) form a disordered region. The span at 704-724 (MATQRQTPATAKKASSTQSRP) shows a compositional bias: polar residues. Residues 729–739 (AKKRPKAAVGR) are compositionally biased toward basic residues.

This sequence belongs to the UPF0313 family. [4Fe-4S] cluster serves as cofactor.

The sequence is that of UPF0313 protein YgiQ (ygiQ) from Escherichia coli (strain K12).